Here is a 224-residue protein sequence, read N- to C-terminus: ATP-dependent dethiobiotin synthetase BioD (224 aa).

12–17 (GVGKTF) lines the ATP pocket. Thr-16 lines the Mg(2+) pocket. Lys-37 is a catalytic residue. Thr-41 provides a ligand contact to substrate. Residues Asn-52, 107-110 (EGAG), 167-168 (GS), 197-199 (PEG), and Glu-204 contribute to the ATP site. Positions 52 and 107 each coordinate Mg(2+).

This sequence belongs to the dethiobiotin synthetase family. Homodimer. The cofactor is Mg(2+).

The protein localises to the cytoplasm. The catalysed reaction is (7R,8S)-7,8-diammoniononanoate + CO2 + ATP = (4R,5S)-dethiobiotin + ADP + phosphate + 3 H(+). It functions in the pathway cofactor biosynthesis; biotin biosynthesis; biotin from 7,8-diaminononanoate: step 1/2. Functionally, catalyzes a mechanistically unusual reaction, the ATP-dependent insertion of CO2 between the N7 and N8 nitrogen atoms of 7,8-diaminopelargonic acid (DAPA, also called 7,8-diammoniononanoate) to form a ureido ring. The sequence is that of ATP-dependent dethiobiotin synthetase BioD from Corynebacterium glutamicum (strain ATCC 13032 / DSM 20300 / JCM 1318 / BCRC 11384 / CCUG 27702 / LMG 3730 / NBRC 12168 / NCIMB 10025 / NRRL B-2784 / 534).